The following is a 61-amino-acid chain: Small ribosomal subunit protein uS14B (61 aa).

Residues cysteine 24, cysteine 27, cysteine 40, and cysteine 43 each coordinate Zn(2+).

The protein belongs to the universal ribosomal protein uS14 family. Zinc-binding uS14 subfamily. In terms of assembly, part of the 30S ribosomal subunit. Contacts proteins S3 and S10. Requires Zn(2+) as cofactor.

In terms of biological role, binds 16S rRNA, required for the assembly of 30S particles and may also be responsible for determining the conformation of the 16S rRNA at the A site. The protein is Small ribosomal subunit protein uS14B of Limosilactobacillus reuteri (strain DSM 20016) (Lactobacillus reuteri).